A 715-amino-acid chain; its full sequence is Patatin-like phospholipase domain-containing protein ATEG_02594 (715 aa).

The chain crosses the membrane as a helical span at residues 84-104; that stretch reads WPFLAFVLGWISFLGVAYILT. The region spanning 274 to 465 is the PNPLA domain; the sequence is LCLSGGATFA…RTDIPIKALN (192 aa). The short motif at 305 to 309 is the GXSXG element; it reads GTSGG. Residue serine 307 is the Nucleophile of the active site. Aspartate 452 acts as the Proton acceptor in catalysis. The interval 613–715 is disordered; the sequence is TAPRGGGRAT…DVDSDTWKGQ (103 aa). The span at 652–661 shows a compositional bias: basic and acidic residues; sequence RTGEYSKEAD. A compositionally biased stretch (polar residues) spans 665–678; sequence AEMSDSSGVDSATA.

It belongs to the PLPL family.

The protein localises to the membrane. Its function is as follows. Probable lipid hydrolase. The protein is Patatin-like phospholipase domain-containing protein ATEG_02594 of Aspergillus terreus (strain NIH 2624 / FGSC A1156).